We begin with the raw amino-acid sequence, 287 residues long: uncharacterized protein (287 aa).

Disordered stretches follow at residues 109 to 175, 203 to 223, and 257 to 287; these read QEES…SSQD, IPPP…SQPV, and KESE…SSEE. The span at 110-136 shows a compositional bias: low complexity; that stretch reads EESSSSLEEGIIEDPVVATPSPASAAP. Residues 143–152 are compositionally biased toward basic and acidic residues; the sequence is RKEFKNEKWK. Residues 153–162 are compositionally biased toward basic residues; sequence EKKKQGRRRN. Residues 273–287 show a composition bias toward basic and acidic residues; it reads SLEEASVHDRISSEE.

It belongs to the chlamydial CPn_0623/CT_504/TC_0791 family.

This is an uncharacterized protein from Chlamydia muridarum (strain MoPn / Nigg).